Here is a 293-residue protein sequence, read N- to C-terminus: 4-diphosphocytidyl-2-C-methyl-D-erythritol kinase (293 aa).

K16 is a catalytic residue. 99–109 (PMGAGLGGGSS) contacts ATP. Residue D141 is part of the active site.

This sequence belongs to the GHMP kinase family. IspE subfamily.

The enzyme catalyses 4-CDP-2-C-methyl-D-erythritol + ATP = 4-CDP-2-C-methyl-D-erythritol 2-phosphate + ADP + H(+). It functions in the pathway isoprenoid biosynthesis; isopentenyl diphosphate biosynthesis via DXP pathway; isopentenyl diphosphate from 1-deoxy-D-xylulose 5-phosphate: step 3/6. Functionally, catalyzes the phosphorylation of the position 2 hydroxy group of 4-diphosphocytidyl-2C-methyl-D-erythritol. This chain is 4-diphosphocytidyl-2-C-methyl-D-erythritol kinase, found in Paraburkholderia phymatum (strain DSM 17167 / CIP 108236 / LMG 21445 / STM815) (Burkholderia phymatum).